Reading from the N-terminus, the 263-residue chain is Renal glandular kallikrein (263 aa).

The first 18 residues, 1 to 18 (MWFLILFLALFLGGIDAA), serve as a signal peptide directing secretion. Residues 19-24 (PPVQSR) constitute a propeptide, activation peptide. Residues 25 to 260 (IIGGFNCEKN…YRSWIKDVMA (236 aa)) form the Peptidase S1 domain. Cystine bridges form between Cys31–Cys175, Cys50–Cys66, Cys153–Cys221, Cys186–Cys200, and Cys211–Cys236. His65 functions as the Charge relay system in the catalytic mechanism. N-linked (GlcNAc...) asparagine glycosylation occurs at Asn102. The active-site Charge relay system is Asp121. Ser215 functions as the Charge relay system in the catalytic mechanism.

Belongs to the peptidase S1 family. Kallikrein subfamily.

It carries out the reaction Preferential cleavage of Arg-|-Xaa bonds in small molecule substrates. Highly selective action to release kallidin (lysyl-bradykinin) from kininogen involves hydrolysis of Met-|-Xaa or Leu-|-Xaa.. Glandular kallikreins cleave Met-Lys and Arg-Ser bonds in kininogen to release Lys-bradykinin. The sequence is that of Renal glandular kallikrein from Mastomys natalensis (African soft-furred rat).